The chain runs to 189 residues: Peptidyl-tRNA hydrolase (189 aa).

Residue tyrosine 15 coordinates tRNA. Histidine 20 functions as the Proton acceptor in the catalytic mechanism. Residues phenylalanine 66, asparagine 68, and asparagine 114 each coordinate tRNA.

This sequence belongs to the PTH family. In terms of assembly, monomer.

It localises to the cytoplasm. It catalyses the reaction an N-acyl-L-alpha-aminoacyl-tRNA + H2O = an N-acyl-L-amino acid + a tRNA + H(+). Its function is as follows. Hydrolyzes ribosome-free peptidyl-tRNAs (with 1 or more amino acids incorporated), which drop off the ribosome during protein synthesis, or as a result of ribosome stalling. Functionally, catalyzes the release of premature peptidyl moieties from peptidyl-tRNA molecules trapped in stalled 50S ribosomal subunits, and thus maintains levels of free tRNAs and 50S ribosomes. The sequence is that of Peptidyl-tRNA hydrolase from Streptococcus pyogenes serotype M6 (strain ATCC BAA-946 / MGAS10394).